The chain runs to 602 residues: Myotubularin (602 aa).

Residues 1 to 32 (MASNSTPKYNSNSLENSLRRSPGDGMNHEQND) are disordered. The segment covering 17–31 (SLRRSPGDGMNHEQN) has biased composition (basic and acidic residues). The GRAM domain occupies 28–96 (HEQNDEIPCL…GVIARIEKMG (69 aa)). The region spanning 162–537 (GWAVYDAMTE…RHLELWVNYY (376 aa)) is the Myotubularin phosphatase domain. A 1,2-diacyl-sn-glycero-3-phospho-(1D-myo-inositol-3,5-bisphosphate) contacts are provided by N287, N312, and I313. A 1,2-diacyl-sn-glycero-3-phospho-(1D-myo-inositol-3-phosphate) contacts are provided by N287, N312, and I313. Residue C374 is the Phosphocysteine intermediate of the active site. Positions 375, 376, 377, 378, 379, 380, 416, and 420 each coordinate a 1,2-diacyl-sn-glycero-3-phospho-(1D-myo-inositol-3,5-bisphosphate). Positions 375, 376, 377, 378, 379, and 380 each coordinate a 1,2-diacyl-sn-glycero-3-phospho-(1D-myo-inositol-3-phosphate). R420 contributes to the a 1,2-diacyl-sn-glycero-3-phospho-(1D-myo-inositol-3-phosphate) binding site. Positions 574–602 (QITNSPKMNSSTTSPSSPSQIMPQVHTPF) are disordered. Over residues 583 to 592 (SSTTSPSSPS) the composition is skewed to low complexity.

It belongs to the protein-tyrosine phosphatase family. Non-receptor class myotubularin subfamily.

The protein resides in the cytoplasm. The protein localises to the cell membrane. It is found in the cell projection. Its subcellular location is the filopodium. It localises to the ruffle. The protein resides in the late endosome. The protein localises to the myofibril. It is found in the sarcomere. The catalysed reaction is a 1,2-diacyl-sn-glycero-3-phospho-(1D-myo-inositol-3-phosphate) + H2O = a 1,2-diacyl-sn-glycero-3-phospho-(1D-myo-inositol) + phosphate. The enzyme catalyses a 1,2-diacyl-sn-glycero-3-phospho-(1D-myo-inositol-3,5-bisphosphate) + H2O = a 1,2-diacyl-sn-glycero-3-phospho-(1D-myo-inositol-5-phosphate) + phosphate. It catalyses the reaction 1,2-dioctanoyl-sn-glycero-3-phospho-(1-D-myo-inositol-3-phosphate) + H2O = 1,2-dioctanoyl-sn-glycero-3-phospho-(1D-myo-inositol) + phosphate. It carries out the reaction 1,2-dioctanoyl-sn-glycero-3-phospho-(1D-myo-inositol-3,5-bisphosphate) + H2O = 1,2-dioctanoyl-sn-glycero-3-phospho-(1D-myo-inositol-5-phosphate) + phosphate. The catalysed reaction is 1,2-dihexadecanoyl-sn-glycero-3-phospho-(1D-myo-inositol-3,5-phosphate) + H2O = 1,2-dihexadecanoyl-sn-glycero-3-phospho-(1D-myo-inositol-5-phosphate) + phosphate. Functionally, lipid phosphatase which dephosphorylates phosphatidylinositol 3-monophosphate (PI3P) and phosphatidylinositol 3,5-bisphosphate (PI(3,5)P2). The sequence is that of Myotubularin (mtm1) from Xenopus tropicalis (Western clawed frog).